The chain runs to 277 residues: 3-methyl-2-oxobutanoate hydroxymethyltransferase (277 aa).

Mg(2+)-binding residues include Asp-49 and Asp-88. 3-methyl-2-oxobutanoate contacts are provided by residues 49–50, Asp-88, and Lys-118; that span reads DS. Glu-120 serves as a coordination point for Mg(2+). Glu-186 serves as the catalytic Proton acceptor.

Belongs to the PanB family. In terms of assembly, homodecamer; pentamer of dimers. Mg(2+) is required as a cofactor.

The protein resides in the cytoplasm. It carries out the reaction 3-methyl-2-oxobutanoate + (6R)-5,10-methylene-5,6,7,8-tetrahydrofolate + H2O = 2-dehydropantoate + (6S)-5,6,7,8-tetrahydrofolate. It functions in the pathway cofactor biosynthesis; (R)-pantothenate biosynthesis; (R)-pantoate from 3-methyl-2-oxobutanoate: step 1/2. Its function is as follows. Catalyzes the reversible reaction in which hydroxymethyl group from 5,10-methylenetetrahydrofolate is transferred onto alpha-ketoisovalerate to form ketopantoate. The chain is 3-methyl-2-oxobutanoate hydroxymethyltransferase from Cereibacter sphaeroides (strain ATCC 17029 / ATH 2.4.9) (Rhodobacter sphaeroides).